A 243-amino-acid chain; its full sequence is 1-(5-phosphoribosyl)-5-[(5-phosphoribosylamino)methylideneamino] imidazole-4-carboxamide isomerase (243 aa).

The active-site Proton acceptor is the D8. The Proton donor role is filled by D129.

Belongs to the HisA/HisF family.

Its subcellular location is the cytoplasm. It catalyses the reaction 1-(5-phospho-beta-D-ribosyl)-5-[(5-phospho-beta-D-ribosylamino)methylideneamino]imidazole-4-carboxamide = 5-[(5-phospho-1-deoxy-D-ribulos-1-ylimino)methylamino]-1-(5-phospho-beta-D-ribosyl)imidazole-4-carboxamide. It functions in the pathway amino-acid biosynthesis; L-histidine biosynthesis; L-histidine from 5-phospho-alpha-D-ribose 1-diphosphate: step 4/9. The chain is 1-(5-phosphoribosyl)-5-[(5-phosphoribosylamino)methylideneamino] imidazole-4-carboxamide isomerase from Brucella suis biovar 1 (strain 1330).